The chain runs to 376 residues: Carbamoyl phosphate synthase small chain (376 aa).

The CPSase stretch occupies residues 1–187; it reads MKALLVLEDG…AEDGSYAWRG (187 aa). 3 residues coordinate L-glutamine: serine 45, glycine 239, and glycine 241. One can recognise a Glutamine amidotransferase type-1 domain in the interval 191-376; sequence PLLVYDFGIK…RKIIGESAGA (186 aa). Residue cysteine 266 is the Nucleophile of the active site. L-glutamine contacts are provided by leucine 267, glutamine 270, asparagine 308, glycine 310, and phenylalanine 311. Catalysis depends on residues histidine 349 and glutamate 351.

It belongs to the CarA family. In terms of assembly, composed of two chains; the small (or glutamine) chain promotes the hydrolysis of glutamine to ammonia, which is used by the large (or ammonia) chain to synthesize carbamoyl phosphate. Tetramer of heterodimers (alpha,beta)4.

It carries out the reaction hydrogencarbonate + L-glutamine + 2 ATP + H2O = carbamoyl phosphate + L-glutamate + 2 ADP + phosphate + 2 H(+). The catalysed reaction is L-glutamine + H2O = L-glutamate + NH4(+). It participates in amino-acid biosynthesis; L-arginine biosynthesis; carbamoyl phosphate from bicarbonate: step 1/1. It functions in the pathway pyrimidine metabolism; UMP biosynthesis via de novo pathway; (S)-dihydroorotate from bicarbonate: step 1/3. Functionally, small subunit of the glutamine-dependent carbamoyl phosphate synthetase (CPSase). CPSase catalyzes the formation of carbamoyl phosphate from the ammonia moiety of glutamine, carbonate, and phosphate donated by ATP, constituting the first step of 2 biosynthetic pathways, one leading to arginine and/or urea and the other to pyrimidine nucleotides. The small subunit (glutamine amidotransferase) binds and cleaves glutamine to supply the large subunit with the substrate ammonia. In Desulfovibrio desulfuricans (strain ATCC 27774 / DSM 6949 / MB), this protein is Carbamoyl phosphate synthase small chain.